A 2167-amino-acid polypeptide reads, in one-letter code: MNSIINAASKVLRLQDDVKKATIILGDILILQPINHEVEPDVENLVQHELTKIIQGYPIQDNMIINSKKGTVEDDLCELNNYTCFALSKSFDLCHDSRNFNIAQPKRWIQLLETLTDSVSFAVIVQIILTLSNISLINKQTLGKLKKLRIRIFEILSNKNDSWKSTLLQKNLIEWYIFMLSVDCTPLELQNLYLHKELKFCNGILNSLTLQVSDPRSQNYLQFENTYKLFQIQKSSRINNSFLFYIEFNSVTSNRIMTIERHIYLEIKEGQFCISNDNYIIGLFENFEFEAGTLYFIGVLIDHNNRITLYVDGSMINQLTLFENSICQLSTCELGSMICSIKVYRFYLWDGLLTEFAINILQAIGTNYQYTFSKKKEGPEVLSLCQDFLIAKAHLMARPTTEISSTKYIDEIELLEMENIIIDVNPNDILQDFTESSNFTVKFEESTNSKNIPEVGKCYFYRSSNLVSKFVSIDSIRLAFLNMTESGSIDDLFHHVSHLMNLLRNIDILNWFKKDFGFPLFAYTLKQKITQDLSQPLNIQFFNLFLEFCGWDFNDISKSIILDTDAYENIVLNLDLWYMNEDQSSLASGGLEIIRFLFFQISSLMEASIYSKFNSNKFNDMNILEKLCLSYQAVTKRENQNSKFNELSSDLISVFVTLLKSNTDKRHLQWFLHLSYYFIKRKDVRSTEIILQAVDQLFSFYLDQGSDENAKILSEIIPLKLILMIMDQIVENNESNPITCLNILFKVVLTNKPLFKQFYKNDGLKLILTMLCKVGKSYREEIISLLLTYSIGNYTTANEIFSGAEDMIGGISNDKITAKEIIYLAVNFIEWHVINSNASDSSSVLDLNNHILRFVEDLKSLSAVPINESVFDPKKSYVMVSLLDLSIALNESEDISKFKSSSKVISELIKGNIMCALTKYAAYDFEVYMSTFFCHSTEYKLVYPKTVMNNSSYLELSFIVTLLPEILNDLVDSNNNLNLMMLKHPYTMSNLLYFLRKFRPDTSQIVMPKDFYFSSYTCLLHCVIQIDKSSFYHFKNVSKSQLLQDFKICIMNLIYSNTLKQIIWEKEEYEMFSESLMAHQEVLFAHGACDNETVGLLLIFFANRLRDCGYNKAVFNCMKVIIKNKERKLKEVACFFDPANKSEVLEGLSNILSCNNSETMNLITEQYPFFFNNTQQVRFINIVTNILFKNNNFSPISVRQIKNQVYEWKNARSEYVTQNNKKCLILFRKDNTSLDFKIKKSISRYTYNLKTDREENAVFYRNNLNLLIFHLKHTLEIQSNPNSSCKWSSDFAEDFDGMKRRLLPAWEPKYEPLINEEDANQDTITGGNRQRRESGSILSYEFIEHMETLESEPVGDLNENRKILRLLKDNDSIATIWNCSLIIGLEIKEGILIHGSNYLYFVSDYYFSLEDKKILKLSEVSQESRDMTVSLINGPDVKRVSTFLKHEVFVWKLLDITFVTKRPFLLRDVAIELLFKERVSAFFSFYNKRVRDDVLRVLNKIPKHLPADPIFSSVLQEINDRGNSIVARNGIGKASIASKFTSVFSANNSLIDGFEISKKWVRGEISNFYYLLSINILAGRSFNDLTQYPVFPWVIADYESNVLDLENPKTYRDLSKPMGAQSEKRKLQFIERYEALASLENADSAPFHYGTHYSSAMIVSSYLIRLKPFVESFLLLQGGSFGPADRLFSSLERAWSSASSENTTDVRELTPEFFFLPEFLINVNSYDFGTDQSGKKVDDVVLPPWANGDPKVFIQKNREALESPYVSAHLHEWIDLIFGYKQKGDIAVKSVNVFNRLSYPGAVNLDNIDDENERRAITGIIHNFGQTPLQIFQEPHPEKIACNVQQLTTEVWRKVPMKPIFEKTIFNLNEKNRSVDYVIHDPSYFDSLYWRGFAFPNLFFRTEESLVSLRIVHKNWLKIGLDIFKKTHMAQITSFAYWKLGEFITGDKNGLIKVWKYRKDKHSVSGNLENKKTMFGHLCELKEMRCYHDYNTLLTLDISGLVYVWDMINFELVRQITNDAQKVAISQHAGSIMVLTKNNAISIFNLNGQIYTSKKFEPAKIVSSIDFFDFTKLDAGYRKHIYWKEMEILLVGFEDGTIEIYELFLNFHNEWAIKLLKQLCTEKGKAITSIKGQGKTYLSQKRRKDTAEPHEIEVIAGTLDGRLAIWY.

One can recognise a BEACH-type PH domain in the interval 1368-1499 (KDNDSIATIW…VRDDVLRVLN (132 aa)). One can recognise a BEACH domain in the interval 1545–1839 (SANNSLIDGF…QIFQEPHPEK (295 aa)). Lysine 1667 participates in a covalent cross-link: Glycyl lysine isopeptide (Lys-Gly) (interchain with G-Cter in ubiquitin). WD repeat units follow at residues 1927-1965 (THMA…HSVS), 1976-2015 (GHLC…LVRQ), 2017-2054 (TNDA…YTSK), 2072-2111 (KLDA…HNEW), and 2129-2167 (SIKG…AIWY).

Its subcellular location is the cytoplasm. It is found in the membrane. May be involved in protein sorting and cell wall formation. This chain is Beige protein homolog 1 (BPH1), found in Saccharomyces cerevisiae (strain ATCC 204508 / S288c) (Baker's yeast).